We begin with the raw amino-acid sequence, 89 residues long: Small ribosomal subunit protein uS19 (89 aa).

Belongs to the universal ribosomal protein uS19 family.

Protein S19 forms a complex with S13 that binds strongly to the 16S ribosomal RNA. This Parabacteroides distasonis (strain ATCC 8503 / DSM 20701 / CIP 104284 / JCM 5825 / NCTC 11152) protein is Small ribosomal subunit protein uS19.